The following is a 309-amino-acid chain: Putative HTH-type transcriptional regulatory protein AF_1787 (309 aa).

Residues 131–185 enclose the HTH cro/C1-type domain; it reads IREARERLGLSVGDMAKMLGVSRRTVKKYEEGTDTTLSTAAKIEEIIGTFAIKEI. Residues 142 to 161 constitute a DNA-binding region (H-T-H motif); sequence VGDMAKMLGVSRRTVKKYEE.

The polypeptide is Putative HTH-type transcriptional regulatory protein AF_1787 (Archaeoglobus fulgidus (strain ATCC 49558 / DSM 4304 / JCM 9628 / NBRC 100126 / VC-16)).